The primary structure comprises 95 residues: uncharacterized protein (95 aa).

This is an uncharacterized protein from Schizosaccharomyces pombe (strain 972 / ATCC 24843) (Fission yeast).